Reading from the N-terminus, the 564-residue chain is Pachytene checkpoint protein 2 (564 aa).

ATP is bound at residue 314–321 (GPPGTGKT).

Belongs to the AAA ATPase family. PCH2 subfamily.

The protein resides in the nucleus. It is found in the nucleolus. The protein localises to the chromosome. Required for the pachytene checkpoint, the meiotic checkpoint that prevents chromosome segregation when defects in recombination and synaptonemal complex formation occurred. Represses meiotic recombination in the rDNA, probably by excluding the meiosis-specific protein HOP1 from the nucleolar region. The chain is Pachytene checkpoint protein 2 (PCH2) from Saccharomyces cerevisiae (strain ATCC 204508 / S288c) (Baker's yeast).